A 176-amino-acid chain; its full sequence is Probable DNA-directed RNA polymerase subunit delta (176 aa).

One can recognise an HTH HARE-type domain in the interval Lys14 to Trp81. Residues Leu114 to Ala176 are disordered. 2 stretches are compositionally biased toward acidic residues: residues Glu116–Glu145 and Val153–Ala176.

The protein belongs to the RpoE family. As to quaternary structure, RNAP is composed of a core of 2 alpha, a beta and a beta' subunits. The core is associated with a delta subunit and one of several sigma factors.

Functionally, participates in both the initiation and recycling phases of transcription. In the presence of the delta subunit, RNAP displays an increased specificity of transcription, a decreased affinity for nucleic acids, and an increased efficiency of RNA synthesis because of enhanced recycling. This chain is Probable DNA-directed RNA polymerase subunit delta, found in Staphylococcus aureus (strain bovine RF122 / ET3-1).